Here is a 95-residue protein sequence, read N- to C-terminus: MANIKSQIKRNRTNENNRLRNKAVKSELKTLIRLVKRAARDNDLPRAEDALRRASLKLDRAVSKGVIHPNQAANRKSGIAKLVVATRLRNSTAGE.

Positions 1 to 22 (MANIKSQIKRNRTNENNRLRNK) are disordered. The span at 12 to 22 (RTNENNRLRNK) shows a compositional bias: basic and acidic residues.

The protein belongs to the bacterial ribosomal protein bS20 family.

Binds directly to 16S ribosomal RNA. In Tropheryma whipplei (strain TW08/27) (Whipple's bacillus), this protein is Small ribosomal subunit protein bS20.